A 460-amino-acid polypeptide reads, in one-letter code: Cysteine--tRNA ligase (460 aa).

Position 28 (cysteine 28) interacts with Zn(2+). The 'HIGH' region motif lies at 30–40; it reads MTVYDYCHLGH. Cysteine 209, histidine 234, and glutamate 238 together coordinate Zn(2+). The 'KMSKS' region motif lies at 266 to 270; that stretch reads KMSKS. Lysine 269 contacts ATP.

Belongs to the class-I aminoacyl-tRNA synthetase family. In terms of assembly, monomer. Zn(2+) is required as a cofactor.

Its subcellular location is the cytoplasm. The catalysed reaction is tRNA(Cys) + L-cysteine + ATP = L-cysteinyl-tRNA(Cys) + AMP + diphosphate. The protein is Cysteine--tRNA ligase of Pseudomonas fluorescens (strain Pf0-1).